The primary structure comprises 283 residues: Thymidylate synthase (283 aa).

Arg-22 lines the dUMP pocket. Cys-160 functions as the Nucleophile in the catalytic mechanism. DUMP is bound by residues 180–183 (RSCD), Asn-191, and 221–223 (HIY). Asp-183 is a binding site for (6R)-5,10-methylene-5,6,7,8-tetrahydrofolate. Ser-282 contributes to the (6R)-5,10-methylene-5,6,7,8-tetrahydrofolate binding site.

Belongs to the thymidylate synthase family. Bacterial-type ThyA subfamily. Homodimer.

It localises to the cytoplasm. The catalysed reaction is dUMP + (6R)-5,10-methylene-5,6,7,8-tetrahydrofolate = 7,8-dihydrofolate + dTMP. It functions in the pathway pyrimidine metabolism; dTTP biosynthesis. Functionally, catalyzes the reductive methylation of 2'-deoxyuridine-5'-monophosphate (dUMP) to 2'-deoxythymidine-5'-monophosphate (dTMP) while utilizing 5,10-methylenetetrahydrofolate (mTHF) as the methyl donor and reductant in the reaction, yielding dihydrofolate (DHF) as a by-product. This enzymatic reaction provides an intracellular de novo source of dTMP, an essential precursor for DNA biosynthesis. This Histophilus somni (strain 129Pt) (Haemophilus somnus) protein is Thymidylate synthase.